The sequence spans 122 residues: Large ribosomal subunit protein uL14c (122 aa).

The protein belongs to the universal ribosomal protein uL14 family. In terms of assembly, part of the 50S ribosomal subunit.

It localises to the plastid. The protein resides in the chloroplast. Functionally, binds to 23S rRNA. The protein is Large ribosomal subunit protein uL14c of Chara vulgaris (Common stonewort).